Reading from the N-terminus, the 158-residue chain is NAD(P)H-quinone oxidoreductase subunit J, chloroplastic (158 aa).

The protein belongs to the complex I 30 kDa subunit family. NDH is composed of at least 16 different subunits, 5 of which are encoded in the nucleus.

It localises to the plastid. It is found in the chloroplast thylakoid membrane. It catalyses the reaction a plastoquinone + NADH + (n+1) H(+)(in) = a plastoquinol + NAD(+) + n H(+)(out). The catalysed reaction is a plastoquinone + NADPH + (n+1) H(+)(in) = a plastoquinol + NADP(+) + n H(+)(out). NDH shuttles electrons from NAD(P)H:plastoquinone, via FMN and iron-sulfur (Fe-S) centers, to quinones in the photosynthetic chain and possibly in a chloroplast respiratory chain. The immediate electron acceptor for the enzyme in this species is believed to be plastoquinone. Couples the redox reaction to proton translocation, and thus conserves the redox energy in a proton gradient. This is NAD(P)H-quinone oxidoreductase subunit J, chloroplastic from Acorus calamus var. americanus (American sweet flag).